The primary structure comprises 740 residues: MNPPGSLEALDPNVDEHLSTQILAPSVHSDNSQERIQARRLRIAARLEARRREALGEYLDGKKESEEDQSKSYKQKEESRLKLAKLLLCGTELVTNIQVAIDIREIHRRVEEEEIKRQRIEKLENEVKTSQDKFDEITSKWEEGKQKRIPQELWEMLNTQQLHCAGLLEDKNKLISELQQELKTKDDQYVKDLKKQSDDICLLLERMEEQVKNVMKTFREELYNIEKAFEVERQELLASNKKKWEQALQAHNAKELEYLNNRMKKVEDYEKQLNRQRIWDCEEYNMIKIKLEQDVQILEQQLQQRKAIYQLNQEKLEYNLQVLKKRDEESTVIKSQQKRKINRLHDILNNLRSKYAKQIKQFQEENQSLTSDYKRLVMQFKELQKAMRHFALIDDEKFWEIWLMNEEEAKDLIARAFDVDRIIHTHHLGLPWAAPDFWFLNNVGPISQQPQKSATQIVEEMLMRSEEEEAEEAAAEPESYLDLPKQISEKTTKRILMLLCDESGFLIESKLLSLLLPLEQNECYLLRLDAIFSALGIESEDDLYKLVNFFLKYRAHRLSSSLQIKPCSQASMEKASMEETSTRSELELAEQTEMEGEKEESLVEGEKEEEEETPPSPWVIHPNDVLKILEAFVMGLKKPRDSRAPLRVQKNVRDNSKDSEYWQALTTVIPSSKQNLWDALYTALEKYHLVLTQRAKLLLENSSLEQQNTELQALLQQYLNSKINSELQVPPTQVLRVPTK.

Residues 101–388 (IDIREIHRRV…QFKELQKAMR (288 aa)) adopt a coiled-coil conformation. Residues 570–617 (ASMEKASMEETSTRSELELAEQTEMEGEKEESLVEGEKEEEEETPPSP) form a disordered region. Residues 575–586 (ASMEETSTRSEL) show a composition bias toward basic and acidic residues. The segment covering 587–598 (ELAEQTEMEGEK) has biased composition (acidic residues). The stretch at 691-724 (LTQRAKLLLENSSLEQQNTELQALLQQYLNSKIN) forms a coiled coil.

The protein belongs to the DRC1 family. In terms of assembly, component of the nexin-dynein regulatory complex (N-DRC). Interacts with CCDC65/DRC2, DRC3, GAS8/DRC4 and TCTE1/DRC5.

Its subcellular location is the cytoplasm. It localises to the cytoskeleton. The protein localises to the cilium axoneme. The protein resides in the flagellum axoneme. Component of the nexin-dynein regulatory complex (N-DRC) a key regulator of ciliary/flagellar motility which maintains the alignment and integrity of the distal axoneme and regulates microtubule sliding in motile axonemes. Plays a critical role in the assembly of N-DRC and also stabilizes the assembly of multiple inner dynein arms and radial spokes. Coassembles with CCDC65/DRC2 to form a central scaffold needed for assembly of the N-DRC and its attachment to the outer doublet microtubules. This Homo sapiens (Human) protein is Dynein regulatory complex protein 1 (DRC1).